Reading from the N-terminus, the 593-residue chain is Zinc metalloproteinase-disintegrin-like atrase-B (593 aa).

Residues Met-1–Ser-20 form the signal peptide. The propeptide occupies Ile-21–Leu-191. A Peptidase M12B domain is found at Lys-205–Pro-400. Glu-208 and Asp-292 together coordinate Ca(2+). Intrachain disulfides connect Cys-316-Cys-395, Cys-356-Cys-379, and Cys-358-Cys-363. A glycan (N-linked (GlcNAc...) asparagine) is linked at Asn-319. Position 341 (His-341) interacts with Zn(2+). The active site involves Glu-342. Zn(2+) contacts are provided by His-345 and His-351. Ca(2+)-binding residues include Cys-395, Asn-398, Ile-410, Asn-413, Phe-415, Glu-417, Glu-420, and Asp-423. In terms of domain architecture, Disintegrin spans Pro-408 to Asn-477. 11 cysteine pairs are disulfide-bonded: Cys-422-Cys-435, Cys-424-Cys-430, Cys-434-Cys-440, Cys-449-Cys-469, Cys-456-Cys-488, Cys-481-Cys-493, Cys-500-Cys-550, Cys-515-Cys-558, Cys-528-Cys-538, Cys-545-Cys-581, and Cys-575-Cys-586. The D/ECD-tripeptide signature appears at Asp-455–Asp-457. Residues Asp-457, Leu-458, Glu-460, and Asp-472 each contribute to the Ca(2+) site. Asn-490 carries an N-linked (GlcNAc...) asparagine glycan.

It belongs to the venom metalloproteinase (M12B) family. P-III subfamily. P-IIIa sub-subfamily. Monomer. Zn(2+) is required as a cofactor. In terms of tissue distribution, expressed by the venom gland.

It is found in the secreted. Inhibited by EDTA, EGTA, 1,10-phenanthroline and DTT. Not inhibited by PMSF and SBTI. Its function is as follows. Snake venom zinc protease that inhibits the classical and alternative pathways of complement by cleaving factor B, C6, C7, and C8. Also slowly and selectively degrades alpha-chain of fibrinogen (FGA), and shows edema-inducing activity. The sequence is that of Zinc metalloproteinase-disintegrin-like atrase-B from Naja atra (Chinese cobra).